The following is a 597-amino-acid chain: Elongation factor 4 (597 aa).

The 183-residue stretch at 2–184 (DHIRNFSIIA…ALIAKVPPPK (183 aa)) folds into the tr-type G domain. GTP contacts are provided by residues 14-19 (DHGKST) and 131-134 (NKID).

It belongs to the TRAFAC class translation factor GTPase superfamily. Classic translation factor GTPase family. LepA subfamily.

The protein localises to the cell inner membrane. It carries out the reaction GTP + H2O = GDP + phosphate + H(+). Its function is as follows. Required for accurate and efficient protein synthesis under certain stress conditions. May act as a fidelity factor of the translation reaction, by catalyzing a one-codon backward translocation of tRNAs on improperly translocated ribosomes. Back-translocation proceeds from a post-translocation (POST) complex to a pre-translocation (PRE) complex, thus giving elongation factor G a second chance to translocate the tRNAs correctly. Binds to ribosomes in a GTP-dependent manner. This is Elongation factor 4 from Burkholderia multivorans (strain ATCC 17616 / 249).